Here is a 105-residue protein sequence, read N- to C-terminus: Large ribosomal subunit protein uL24 (105 aa).

The protein belongs to the universal ribosomal protein uL24 family. In terms of assembly, part of the 50S ribosomal subunit.

Its function is as follows. One of two assembly initiator proteins, it binds directly to the 5'-end of the 23S rRNA, where it nucleates assembly of the 50S subunit. One of the proteins that surrounds the polypeptide exit tunnel on the outside of the subunit. The protein is Large ribosomal subunit protein uL24 of Mycolicibacterium vanbaalenii (strain DSM 7251 / JCM 13017 / BCRC 16820 / KCTC 9966 / NRRL B-24157 / PYR-1) (Mycobacterium vanbaalenii).